A 161-amino-acid polypeptide reads, in one-letter code: MSSFTHFNDQGRAKMVDISDKKATVRTAIACSSIVVTKEIYDKISHNEIGKGDVLAVAQIAGIMAAKRTSDIIPMCHPLLLKGVDVSFDWKQSDEQYRLLIEVKVKTEGSTGVEMEALTAASATALTVYDMCKAVDKGMIIGETYLLEKTGGKSGDYTRKS.

Substrate-binding positions include 75 to 77 (MCH) and 115 to 116 (ME). D130 is a catalytic residue.

The protein belongs to the MoaC family. Homohexamer; trimer of dimers.

The enzyme catalyses (8S)-3',8-cyclo-7,8-dihydroguanosine 5'-triphosphate = cyclic pyranopterin phosphate + diphosphate. The protein operates within cofactor biosynthesis; molybdopterin biosynthesis. In terms of biological role, catalyzes the conversion of (8S)-3',8-cyclo-7,8-dihydroguanosine 5'-triphosphate to cyclic pyranopterin monophosphate (cPMP). The protein is Cyclic pyranopterin monophosphate synthase of Bacillus cereus (strain 03BB102).